Consider the following 126-residue polypeptide: uncharacterized protein (126 aa).

A run of 3 helical transmembrane segments spans residues 4–24, 42–62, and 64–84; these read LIIA…VNIL, AITI…IINP, and ISAS…SYTV.

It localises to the membrane. This is an uncharacterized protein from Saccharomyces cerevisiae (strain ATCC 204508 / S288c) (Baker's yeast).